Here is a 403-residue protein sequence, read N- to C-terminus: MREQAPVRFGTPLTAGATRVMLLGSGELGKEVIIALQRLGVEVIAVDRYDNAPGHQVAHRAHTIDMSDPEALLRLVEEERPHFVVPEIEAIATDALATVEERGTAVVIPTARATQLTMNREGIRRLAAEELGLPTSPYEFAESLEEVRAATERIGFPCVIKPVMSSSGKGQSTVRDTGGVETAWEYALAGGRINYGRVIVEGFVDFDYEITQLTVRAIGADGEVGTFFCEPIGHLQDSGDYVESWQPQPMSDAALARSREVAEKVTAALGGRGIFGVELFVKGDDVYFSEVSPRPHDTGLVTLRTQRLSEFELHARAILGLPVDTTLTTPGASAVIYGGVDATGIGFDGVADAMAVPETDLRLFGKPESFVRRRMGVAVSTGPDVETARSRAREAASRVEPVA.

N(1)-(5-phospho-beta-D-ribosyl)glycinamide contacts are provided by residues 27-28 (EL) and Glu87. Residues Arg120, Lys161, 166–171 (SSGKGQ), 201–204 (EGFV), and Glu209 each bind ATP. The ATP-grasp domain occupies 125–319 (RLAAEELGLP…EFELHARAIL (195 aa)). Positions 278 and 290 each coordinate Mg(2+). Residues Asp297, Lys366, and 373–374 (RR) each bind N(1)-(5-phospho-beta-D-ribosyl)glycinamide. The tract at residues 382–403 (GPDVETARSRAREAASRVEPVA) is disordered. Residues 386–397 (ETARSRAREAAS) show a composition bias toward basic and acidic residues.

It belongs to the PurK/PurT family. In terms of assembly, homodimer.

It catalyses the reaction N(1)-(5-phospho-beta-D-ribosyl)glycinamide + formate + ATP = N(2)-formyl-N(1)-(5-phospho-beta-D-ribosyl)glycinamide + ADP + phosphate + H(+). The protein operates within purine metabolism; IMP biosynthesis via de novo pathway; N(2)-formyl-N(1)-(5-phospho-D-ribosyl)glycinamide from N(1)-(5-phospho-D-ribosyl)glycinamide (formate route): step 1/1. Involved in the de novo purine biosynthesis. Catalyzes the transfer of formate to 5-phospho-ribosyl-glycinamide (GAR), producing 5-phospho-ribosyl-N-formylglycinamide (FGAR). Formate is provided by PurU via hydrolysis of 10-formyl-tetrahydrofolate. The sequence is that of Formate-dependent phosphoribosylglycinamide formyltransferase from Rhodococcus jostii (strain RHA1).